Consider the following 46-residue polypeptide: Antimicrobial peptide eNAP-2 (46 aa).

The WAP domain occupies arginine 12–asparagine 46.

Its function is as follows. Has antibiotic activity against several equine uterine pathogens; S.zooepidemicus, E.coli and P.aeruginosa. Highly efficient against S.zoopedemicus. Not active against K.pneumoniae. Selectively inactivates microbial serine proteases (subtilisin A and proteinase K) without inhibiting mammalian serine proteases (human neutrophil elastase, human cathepsin G and bovine pancreatic trypsin). This chain is Antimicrobial peptide eNAP-2, found in Equus caballus (Horse).